Consider the following 644-residue polypeptide: Macrolide export ATP-binding/permease protein MacB (644 aa).

One can recognise an ABC transporter domain in the interval 4-242 (IECKNINRCF…SNVGRIREKA (239 aa)). 40–47 (GQSGSGKS) serves as a coordination point for ATP. 4 consecutive transmembrane segments (helical) span residues 270 to 290 (LLTMLGIIIGIASVVSVVALG), 524 to 544 (IALISLVVGGIGVMNIMLVSV), 574 to 594 (LICIIGGLVGVGLSAAVSLVF), and 607 to 627 (AASVIGAVACSTGIGIAFGFM).

Belongs to the ABC transporter superfamily. Macrolide exporter (TC 3.A.1.122) family. As to quaternary structure, homodimer.

Its subcellular location is the cell inner membrane. In terms of biological role, non-canonical ABC transporter that contains transmembrane domains (TMD), which form a pore in the inner membrane, and an ATP-binding domain (NBD), which is responsible for energy generation. Confers resistance against macrolides. The polypeptide is Macrolide export ATP-binding/permease protein MacB (Neisseria gonorrhoeae (strain ATCC 700825 / FA 1090)).